We begin with the raw amino-acid sequence, 316 residues long: NAC domain-containing protein 2 (316 aa).

Residues 17-170 (LPPGFRFHPT…DWVLCRLYNK (154 aa)) enclose the NAC domain. The DNA-binding element occupies 114 to 176 (LGIKKALVFY…LYNKKNEWEK (63 aa)). The segment at 185-210 (EEASDMVTSQSHSHTHSWGETRTPES) is disordered. A compositionally biased stretch (polar residues) spans 190–200 (MVTSQSHSHTH).

Forms homodimer. Interacts with NAC071. As to expression, expressed in roots and stamens.

It localises to the nucleus. Functionally, transcription factor that possesses transactivation activity. Transcription activator involved in response to abiotic stresses. Plays a positive role during dehydration and salt stress. Binds specifically to the 5'-CATGTG-3' motif found in promoters of stress-responsive genes. This is NAC domain-containing protein 2 from Oryza sativa subsp. japonica (Rice).